A 198-amino-acid chain; its full sequence is Uracil phosphoribosyltransferase homolog (198 aa).

It belongs to the UPRTase family.

It is found in the plastid. The protein localises to the chloroplast. The polypeptide is Uracil phosphoribosyltransferase homolog (Pyropia yezoensis (Susabi-nori)).